Here is a 71-residue protein sequence, read N- to C-terminus: Disintegrin tzabcanin (71 aa).

Residues 1–71 (GEECDCGSPA…ADCPRNHFHA (71 aa)) form the Disintegrin domain. Disulfide bonds link cysteine 4–cysteine 19, cysteine 6–cysteine 14, cysteine 13–cysteine 36, cysteine 27–cysteine 33, cysteine 32–cysteine 57, and cysteine 45–cysteine 64. A Cell attachment site motif is present at residues 49–51 (RGD).

The protein belongs to the venom metalloproteinase (M12B) family. P-II subfamily. P-IIa sub-subfamily. As to expression, expressed by the venom gland.

It localises to the secreted. Its function is as follows. Inhibits fibrinogen interaction with platelets. Acts by binding to alpha-IIb/beta-3 (ITGA2B/ITGB3) on the platelet surface and inhibits aggregation induced by ADP, thrombin, platelet-activating factor and collagen. Inhibits cell adhesion to vitronectin, probably by blocking its receptor integrin alpha-V/beta-3 (ITGAV/ITGB3), and to fibronectin in vitro. Shows little to no cytotoxicity in vitro. The protein is Disintegrin tzabcanin of Crotalus tzabcan (Yucatan neotropical rattlesnake).